A 318-amino-acid polypeptide reads, in one-letter code: NADH-ubiquinone oxidoreductase chain 1 (318 aa).

A run of 8 helical transmembrane segments spans residues 2-22 (FTIN…FLTL), 70-90 (MFII…VPLP), 100-120 (LGVL…LWSG), 146-166 (LAII…STLI), 171-191 (HLWL…STLA), 222-242 (LFFM…TILF), 253-273 (ELYT…FLWI), and 294-314 (LPLT…MSSI).

This sequence belongs to the complex I subunit 1 family.

The protein localises to the mitochondrion inner membrane. The catalysed reaction is a ubiquinone + NADH + 5 H(+)(in) = a ubiquinol + NAD(+) + 4 H(+)(out). In terms of biological role, core subunit of the mitochondrial membrane respiratory chain NADH dehydrogenase (Complex I) that is believed to belong to the minimal assembly required for catalysis. Complex I functions in the transfer of electrons from NADH to the respiratory chain. The immediate electron acceptor for the enzyme is believed to be ubiquinone. In Rhinoceros unicornis (Greater Indian rhinoceros), this protein is NADH-ubiquinone oxidoreductase chain 1 (MT-ND1).